The primary structure comprises 562 residues: Protoporphyrinogen oxidase 1, chloroplastic (562 aa).

Residues 1 to 48 (MSAMALSSTMALSLPQSSMSLSHCRHNRITILIPSSSLRRRGGSSIRC) constitute a chloroplast transit peptide. FAD contacts are provided by residues 88 to 93 (GGGISG), 115 to 116 (EA), and 137 to 140 (GPNS). Residues 274 to 302 (TLKTIQERKDNPKPPRDPRLPKPKGQTVG) form a disordered region. The segment covering 278-293 (IQERKDNPKPPRDPRL) has biased composition (basic and acidic residues). FAD-binding positions include V323 and 536–538 (VAL).

This sequence belongs to the protoporphyrinogen/coproporphyrinogen oxidase family. Protoporphyrinogen oxidase subfamily. The cofactor is FAD.

Its subcellular location is the plastid. The protein localises to the chloroplast thylakoid membrane. It is found in the chloroplast inner membrane. It carries out the reaction protoporphyrinogen IX + 3 O2 = protoporphyrin IX + 3 H2O2. The protein operates within porphyrin-containing compound metabolism; protoporphyrin-IX biosynthesis; protoporphyrin-IX from protoporphyrinogen-IX: step 1/1. It functions in the pathway porphyrin-containing compound metabolism; chlorophyll biosynthesis. Functionally, catalyzes the 6-electron oxidation of protoporphyrinogen-IX to form protoporphyrin-IX. In Spinacia oleracea (Spinach), this protein is Protoporphyrinogen oxidase 1, chloroplastic.